Here is a 340-residue protein sequence, read N- to C-terminus: Beta-ketoacyl-[acyl-carrier-protein] synthase III (340 aa).

Catalysis depends on residues cysteine 122 and histidine 260. An ACP-binding region spans residues 261–265 (QANTR). Asparagine 291 is a catalytic residue.

Belongs to the thiolase-like superfamily. FabH family. Homodimer.

The protein resides in the cytoplasm. It catalyses the reaction malonyl-[ACP] + acetyl-CoA + H(+) = 3-oxobutanoyl-[ACP] + CO2 + CoA. Its pathway is lipid metabolism; fatty acid biosynthesis. In terms of biological role, catalyzes the condensation reaction of fatty acid synthesis by the addition to an acyl acceptor of two carbons from malonyl-ACP. Catalyzes the first condensation reaction which initiates fatty acid synthesis and may therefore play a role in governing the total rate of fatty acid production. Possesses both acetoacetyl-ACP synthase and acetyl transacylase activities. Its substrate specificity determines the biosynthesis of branched-chain and/or straight-chain of fatty acids. The chain is Beta-ketoacyl-[acyl-carrier-protein] synthase III from Mycobacteroides abscessus (strain ATCC 19977 / DSM 44196 / CCUG 20993 / CIP 104536 / JCM 13569 / NCTC 13031 / TMC 1543 / L948) (Mycobacterium abscessus).